A 376-amino-acid chain; its full sequence is Polar flagellin A (376 aa).

Coiled coils occupy residues 103–128 and 310–338; these read SNSK…RIAE and FQNR…IKDT.

This sequence belongs to the bacterial flagellin family. In terms of assembly, heteromer of multiple flagellin subunits including FlaA, FlaB/D, FlaC, FlaE and FlaF.

The protein resides in the secreted. Its subcellular location is the bacterial flagellum. Its function is as follows. Flagellin is the subunit protein which polymerizes to form the filaments of bacterial flagella. FlaA is not essential for polar flagellar synthesis and swimming motility. Homomer of FlaA is able to form a functional filament. In Vibrio parahaemolyticus serotype O3:K6 (strain RIMD 2210633), this protein is Polar flagellin A (flaA).